Reading from the N-terminus, the 436-residue chain is Tol-Pal system protein TolB (436 aa).

Positions 1-28 are cleaved as a signal peptide; sequence MMKCSFFRAILVAVGLMAAAVVATPANA.

It belongs to the TolB family. In terms of assembly, the Tol-Pal system is composed of five core proteins: the inner membrane proteins TolA, TolQ and TolR, the periplasmic protein TolB and the outer membrane protein Pal. They form a network linking the inner and outer membranes and the peptidoglycan layer.

Its subcellular location is the periplasm. Part of the Tol-Pal system, which plays a role in outer membrane invagination during cell division and is important for maintaining outer membrane integrity. This is Tol-Pal system protein TolB from Rhizobium etli (strain CIAT 652).